We begin with the raw amino-acid sequence, 350 residues long: Secreted effector protein PipB2 (350 aa).

Pentapeptide repeat domains lie at 162 to 201, 202 to 241, 247 to 286, and 287 to 326; these read ANLT…NLSG, ASLG…SLLG, CNCS…IMEG, and AVLT…TLTD.

As to quaternary structure, interacts with the host kinesin light chain (KLC), a subunit of the kinesin-1 motor complex.

Its subcellular location is the secreted. It is found in the host membrane. Functionally, effector proteins function to alter host cell physiology and promote bacterial survival in host tissues. Involved in the reorganization of late endosome/lysosome (LE/Lys) compartments in mammalian cells. Necessary and sufficient to link kinesin-1 onto the Salmonella-containing vacuole (SCV) membrane. Required for centrifugal extension of lysosomal glycoprotein-rich membrane tubules, known as Salmonella-induced filaments (Sifs), away from the SCV and toward the cell periphery. Required for virulence, but not for intracellular survival and replication in phagocytic cells. This Salmonella typhi protein is Secreted effector protein PipB2 (pipB2).